The sequence spans 218 residues: uncharacterized protein (218 aa).

The 117-residue stretch at 7 to 123 (RVALADDQPL…ELIDAIRAAA (117 aa)) folds into the Response regulatory domain. Aspartate 58 bears the 4-aspartylphosphate mark. Residues 150–215 (AEELAEPFTK…QAVVFAIRNG (66 aa)) enclose the HTH luxR-type domain. The segment at residues 174-193 (NEDIAEKLFVSESTVKTHVH) is a DNA-binding region (H-T-H motif).

In terms of processing, phosphorylated by YxjM.

The protein localises to the cytoplasm. Functionally, probable member of the two-component regulatory system YxjM/YxjL. This is an uncharacterized protein from Bacillus subtilis (strain 168).